The sequence spans 349 residues: Protein RecA (349 aa).

65–72 is an ATP binding site; sequence GPESSGKT. The interval 329-349 is disordered; that stretch reads FDGDVDENENEDDSPKTLFDE. A compositionally biased stretch (acidic residues) spans 331 to 340; that stretch reads GDVDENENED.

The protein belongs to the RecA family.

The protein localises to the cytoplasm. In terms of biological role, can catalyze the hydrolysis of ATP in the presence of single-stranded DNA, the ATP-dependent uptake of single-stranded DNA by duplex DNA, and the ATP-dependent hybridization of homologous single-stranded DNAs. It interacts with LexA causing its activation and leading to its autocatalytic cleavage. The sequence is that of Protein RecA from Staphylococcus epidermidis (strain ATCC 35984 / DSM 28319 / BCRC 17069 / CCUG 31568 / BM 3577 / RP62A).